Consider the following 560-residue polypeptide: NAD-dependent malic enzyme (560 aa).

The active-site Proton donor is the tyrosine 100. Position 153 (arginine 153) interacts with NAD(+). The Proton acceptor role is filled by lysine 171. A divalent metal cation-binding residues include glutamate 242, aspartate 243, and aspartate 266. 2 residues coordinate NAD(+): aspartate 266 and asparagine 413.

It belongs to the malic enzymes family. As to quaternary structure, homotetramer. Mg(2+) is required as a cofactor. Requires Mn(2+) as cofactor.

It carries out the reaction (S)-malate + NAD(+) = pyruvate + CO2 + NADH. The catalysed reaction is oxaloacetate + H(+) = pyruvate + CO2. In Psychromonas ingrahamii (strain DSM 17664 / CCUG 51855 / 37), this protein is NAD-dependent malic enzyme.